A 916-amino-acid polypeptide reads, in one-letter code: Isoleucine--tRNA ligase (916 aa).

The 'HIGH' region signature appears at Pro57–His67. Glu554 contributes to the L-isoleucyl-5'-AMP binding site. Positions Lys595 to Ser599 match the 'KMSKS' region motif. Residue Lys598 coordinates ATP. Residues Cys885, Cys888, Cys905, and Cys908 each coordinate Zn(2+).

This sequence belongs to the class-I aminoacyl-tRNA synthetase family. IleS type 1 subfamily. In terms of assembly, monomer. It depends on Zn(2+) as a cofactor.

It is found in the cytoplasm. The catalysed reaction is tRNA(Ile) + L-isoleucine + ATP = L-isoleucyl-tRNA(Ile) + AMP + diphosphate. Functionally, catalyzes the attachment of isoleucine to tRNA(Ile). As IleRS can inadvertently accommodate and process structurally similar amino acids such as valine, to avoid such errors it has two additional distinct tRNA(Ile)-dependent editing activities. One activity is designated as 'pretransfer' editing and involves the hydrolysis of activated Val-AMP. The other activity is designated 'posttransfer' editing and involves deacylation of mischarged Val-tRNA(Ile). This is Isoleucine--tRNA ligase from Staphylococcus epidermidis (strain ATCC 12228 / FDA PCI 1200).